A 488-amino-acid chain; its full sequence is MTSTVLVDIRDEVTCPICLELLTEPLSIDCGHSFCQVCIIGNSNNSVFGQGGRSSCPVCRTSYQPGNLRPNRHLAAIVKRLREVALCPGKQLEVIFCALHGEKLQLFCKEDGKLICWLCERSQEHRGHHTFLMEEVAQEYQDMFQESLKKLRREQQEAEKLKALIQEKRESWKSQVEPEKRRIQTEFKQLRSILDREEQRELKKLEVEERKGLSIIEKAEGDLIHQSQSLKDLISDLEHRCQGSTVELLQDVGDVTKRSEFWTLRKPQALPTKLKSLFRAPDLRKMLKVFRELTDVQSYWVDVTLNPQTANLNLVLSKNRRQVRFVGAQLSEPSSLEEHYDCSVLGSQHFSSGKYYWEVDVSKKTAWILGVCSTPVDPMFSFSQYSSKQGAYSRYQPQCGYWVIGLQCKHEYRAYEDSSPSLLLSMTVPPRRIGIFLDCEAGTVSFYNVTNHGLPIYTFSKYYFPSALCPYFNPCSCIVPMTLRRPTS.

An RING-type zinc finger spans residues 15–60 (CPICLELLTEPLSIDCGHSFCQVCIIGNSNNSVFGQGGRSSCPVCR). A B box-type zinc finger spans residues 92–133 (LEVIFCALHGEKLQLFCKEDGKLICWLCERSQEHRGHHTFLM). Residues Cys-97, His-100, Cys-119, and His-125 each coordinate Zn(2+). Residues 132-223 (LMEEVAQEYQ…SIIEKAEGDL (92 aa)) adopt a coiled-coil conformation. In terms of domain architecture, B30.2/SPRY spans 282–488 (DLRKMLKVFR…VPMTLRRPTS (207 aa)).

It belongs to the TRIM/RBCC family. As to quaternary structure, homotrimer. Forms heteromultimers (via B30.2/SPRY domain) with TRIM5. Interacts with MYC. Interacts (via SPRY domain) with IKBKE. Interacts with VAMP8; this interaction contributes to the activation of the type I interferon antiviral response. Interacts with DHX16.

The protein localises to the cytoplasm. The enzyme catalyses S-ubiquitinyl-[E2 ubiquitin-conjugating enzyme]-L-cysteine + [acceptor protein]-L-lysine = [E2 ubiquitin-conjugating enzyme]-L-cysteine + N(6)-ubiquitinyl-[acceptor protein]-L-lysine.. Its pathway is protein modification; protein ubiquitination. In terms of biological role, E3 ubiquitin ligase that plays a crucial role in the activation of the IKBKE-dependent branch of the type I interferon signaling pathway. In concert with the ubiquitin-conjugating E2 enzyme UBE2K, synthesizes unanchored 'Lys-48'-linked polyubiquitin chains that promote the oligomerization and autophosphorylation of IKBKE leading to stimulation of an antiviral response. Also ubiquitinates MYC and inhibits its transcription activation activity, maintaining the pluripotency of embryonic stem cells. Promotes the association of unanchored 'Lys-48'-polyubiquitin chains with DHX16 leading to enhancement of RIGI-mediated innate antiviral immune response. The chain is Tripartite motif-containing protein 6 (Trim6) from Mus musculus (Mouse).